Here is a 277-residue protein sequence, read N- to C-terminus: Large ribosomal subunit protein mL46 (277 aa).

Lysine 217 is modified (N6-succinyllysine). Lysine 228 bears the N6-acetyllysine mark. The residue at position 246 (lysine 246) is an N6-succinyllysine.

It belongs to the mitochondrion-specific ribosomal protein mL46 family. As to quaternary structure, component of the mitochondrial ribosome large subunit (39S) which comprises a 16S rRNA and about 50 distinct proteins.

It localises to the mitochondrion. In Rattus norvegicus (Rat), this protein is Large ribosomal subunit protein mL46 (Mrpl46).